Here is a 618-residue protein sequence, read N- to C-terminus: Serine--tRNA ligase, cytoplasmic (618 aa).

417–419 (TSE) lines the L-serine pocket. 448–450 (RTE) provides a ligand contact to ATP. Glu-472 contacts L-serine. 536 to 539 (EVSS) serves as a coordination point for ATP. Ser-570 provides a ligand contact to L-serine.

The protein belongs to the class-II aminoacyl-tRNA synthetase family. Type-1 seryl-tRNA synthetase subfamily. Homodimer. The tRNA molecule binds across the dimer.

It is found in the cytoplasm. The enzyme catalyses tRNA(Ser) + L-serine + ATP = L-seryl-tRNA(Ser) + AMP + diphosphate + H(+). The catalysed reaction is tRNA(Sec) + L-serine + ATP = L-seryl-tRNA(Sec) + AMP + diphosphate + H(+). The protein operates within aminoacyl-tRNA biosynthesis; selenocysteinyl-tRNA(Sec) biosynthesis; L-seryl-tRNA(Sec) from L-serine and tRNA(Sec): step 1/1. In terms of biological role, catalyzes the attachment of serine to tRNA(Ser). Is also able to aminoacylate tRNA(Sec) with serine, to form the misacylated tRNA L-seryl-tRNA(Sec), which will be further converted into selenocysteinyl-tRNA(Sec). This is Serine--tRNA ligase, cytoplasmic from Plasmodium falciparum (isolate 3D7).